We begin with the raw amino-acid sequence, 182 residues long: ADP-ribosylation factor-like protein 3 (182 aa).

Residue glycine 2 is the site of N-myristoyl glycine attachment. At serine 5 the chain carries Phosphoserine. GTP is bound by residues glycine 24–threonine 31, threonine 48, aspartate 67–glutamine 71, glycine 70, asparagine 126–aspartate 129, and serine 159–leucine 161. Positions 31 and 48 each coordinate Mg(2+).

This sequence belongs to the small GTPase superfamily. Arf family. In terms of assembly, found in a complex with ARL3, RP2 and UNC119 (or UNC119B); RP2 induces hydrolysis of GTP ARL3 in the complex, leading to the release of UNC119 (or UNC119B). Interacts with RP2; interaction is direct and stimulated with the activated GTP-bound form of ARL3. Interacts with SYS1. The GTP-bound form interacts with ARL2BP and PDE6D. Microtubule-associated protein. May interact with GOLGA4. Interacts with GGA1; the interaction recruits PKD1:PKD2 complex to trans-Golgi network and is required for ciliary targeting of PKD1:PKD2 complex. Interacts with DNAAF9. In terms of tissue distribution, expressed in the retina. Strongly expressed in connecting cilium, the myoid region of the inner segments (IS) and in cone photoreceptors (at protein level).

The protein resides in the golgi apparatus membrane. Its subcellular location is the cytoplasm. It localises to the cytoskeleton. The protein localises to the spindle. It is found in the nucleus. The protein resides in the microtubule organizing center. Its subcellular location is the centrosome. It localises to the cell projection. The protein localises to the cilium. Its function is as follows. Small GTP-binding protein which cycles between an inactive GDP-bound and an active GTP-bound form, and the rate of cycling is regulated by guanine nucleotide exchange factors (GEF) and GTPase-activating proteins (GAP). Required for normal cytokinesis and cilia signaling. Requires assistance from GTPase-activating proteins (GAPs) like RP2 and PDE6D, in order to cycle between inactive GDP-bound and active GTP-bound forms. Required for targeting proteins to the cilium, including myristoylated NPHP3 and prenylated INPP5E. Targets NPHP3 to the ciliary membrane by releasing myristoylated NPHP3 from UNC119B cargo adapter into the cilium. Required for PKD1:PKD2 complex targeting from the trans-Golgi network to the cilium. This chain is ADP-ribosylation factor-like protein 3 (ARL3), found in Homo sapiens (Human).